A 638-amino-acid chain; its full sequence is Probable potassium transport system protein Kup (638 aa).

Positions 1-20 (MQVEHEVATEGGQAPASSGH) are disordered. The next 12 membrane-spanning stretches (helical) occupy residues 24–44 (IAGL…TSPL), 67–87 (ILSL…VVFI), 115–135 (AWWL…DGMI), 153–173 (PAFK…LFVM), 181–201 (VGAI…VLGI), 228–248 (LIGW…EALY), 263–283 (WFSL…ALIL), 301–321 (LVYP…QAVI), 353–373 (IYVP…VVGF), 382–402 (AYGI…FVVV), 413–433 (AVLF…ATTV), and 435–455 (IFAG…LLRT).

The protein belongs to the HAK/KUP transporter (TC 2.A.72) family.

It localises to the cell inner membrane. The catalysed reaction is K(+)(in) + H(+)(in) = K(+)(out) + H(+)(out). In terms of biological role, transport of potassium into the cell. Likely operates as a K(+):H(+) symporter. This Azoarcus sp. (strain BH72) protein is Probable potassium transport system protein Kup.